We begin with the raw amino-acid sequence, 88 residues long: Small ribosomal subunit protein uS15 (88 aa).

Residues 1-20 (MLATEKKQELIDQYKRHEGD) show a composition bias toward basic and acidic residues. Residues 1-21 (MLATEKKQELIDQYKRHEGDT) form a disordered region.

This sequence belongs to the universal ribosomal protein uS15 family. In terms of assembly, part of the 30S ribosomal subunit. Forms a bridge to the 50S subunit in the 70S ribosome, contacting the 23S rRNA.

Its function is as follows. One of the primary rRNA binding proteins, it binds directly to 16S rRNA where it helps nucleate assembly of the platform of the 30S subunit by binding and bridging several RNA helices of the 16S rRNA. In terms of biological role, forms an intersubunit bridge (bridge B4) with the 23S rRNA of the 50S subunit in the ribosome. This chain is Small ribosomal subunit protein uS15, found in Syntrophotalea carbinolica (strain DSM 2380 / NBRC 103641 / GraBd1) (Pelobacter carbinolicus).